Here is a 74-residue protein sequence, read N- to C-terminus: Major structural pilin EpdE (74 aa).

A propeptide spanning residues 1–12 (MKFLEKLTSKKG) is cleaved from the precursor. A Pyrrolidone carboxylic acid modification is found at glutamine 13. Residues 13–21 (QIAMELGIL) carry the QXSXEXXXL motif.

The N-terminus is cleaved by the prepilin peptidase EppA, which recognizes the class III signal sequence. In terms of processing, N-glycosylated. Glycosylated with an N-linked branched pentasaccharide glycan. May contain glycans at three sites. Glycosylation is AglB-dependent. The N-glycosylation does not occur unless the signal peptide has been cleaved first.

The protein localises to the secreted. The protein resides in the cell surface. Its subcellular location is the fimbrium. Functionally, major component of the type IV-like pili. In Methanococcus maripaludis (strain DSM 14266 / JCM 13030 / NBRC 101832 / S2 / LL), this protein is Major structural pilin EpdE.